A 45-amino-acid polypeptide reads, in one-letter code: Large ribosomal subunit protein bL34 (45 aa).

Basic residues-rich tracts occupy residues 1-15 (MKAK…RKRA) and 22-45 (MKTK…IAIK). The segment at 1–45 (MKAKSHLSNKKRKRASGFLARMKTKAGRKILARRRAKGRKRIAIK) is disordered.

It belongs to the bacterial ribosomal protein bL34 family.

The chain is Large ribosomal subunit protein bL34 from Sulfurihydrogenibium sp. (strain YO3AOP1).